The following is a 327-amino-acid chain: uncharacterized protein (327 aa).

Positions 32 to 105 (VRLDKWLAEQ…IPLDILYEDE (74 aa)) constitute an S4 RNA-binding domain. Asp-156 is an active-site residue.

Belongs to the pseudouridine synthase RluA family.

The catalysed reaction is a uridine in RNA = a pseudouridine in RNA. This is an uncharacterized protein from Synechocystis sp. (strain ATCC 27184 / PCC 6803 / Kazusa).